The primary structure comprises 215 residues: Phosphatidylserine decarboxylase proenzyme (215 aa).

Serine 181 (schiff-base intermediate with substrate; via pyruvic acid) is an active-site residue. Serine 181 carries the pyruvic acid (Ser); by autocatalysis modification.

This sequence belongs to the phosphatidylserine decarboxylase family. PSD-A subfamily. In terms of assembly, heterodimer of a large membrane-associated beta subunit and a small pyruvoyl-containing alpha subunit. Pyruvate is required as a cofactor. In terms of processing, is synthesized initially as an inactive proenzyme. Formation of the active enzyme involves a self-maturation process in which the active site pyruvoyl group is generated from an internal serine residue via an autocatalytic post-translational modification. Two non-identical subunits are generated from the proenzyme in this reaction, and the pyruvate is formed at the N-terminus of the alpha chain, which is derived from the carboxyl end of the proenzyme. The post-translation cleavage follows an unusual pathway, termed non-hydrolytic serinolysis, in which the side chain hydroxyl group of the serine supplies its oxygen atom to form the C-terminus of the beta chain, while the remainder of the serine residue undergoes an oxidative deamination to produce ammonia and the pyruvoyl prosthetic group on the alpha chain.

It is found in the cell membrane. It catalyses the reaction a 1,2-diacyl-sn-glycero-3-phospho-L-serine + H(+) = a 1,2-diacyl-sn-glycero-3-phosphoethanolamine + CO2. It functions in the pathway phospholipid metabolism; phosphatidylethanolamine biosynthesis; phosphatidylethanolamine from CDP-diacylglycerol: step 2/2. Catalyzes the formation of phosphatidylethanolamine (PtdEtn) from phosphatidylserine (PtdSer). The chain is Phosphatidylserine decarboxylase proenzyme from Polynucleobacter asymbioticus (strain DSM 18221 / CIP 109841 / QLW-P1DMWA-1) (Polynucleobacter necessarius subsp. asymbioticus).